Here is a 440-residue protein sequence, read N- to C-terminus: Transposon Ty1-LR4 Gag polyprotein (440 aa).

Polar residues-rich tracts occupy residues 1-10 (MESQQLSQHP), 48-60 (TKANSQQTTTPAS), and 127-152 (QSQFPQYPSSVGTPLSTPSPESGNTF). Disordered stretches follow at residues 1 to 93 (MESQ…MMTQ), 126 to 173 (PQSQ…RPPP), and 352 to 440 (GSRN…PGTY). Over residues 153-165 (TDSSSADSDMTST) the composition is skewed to low complexity. The segment at 299–401 (NNGIHINNKV…NSKSKTARAH (103 aa)) is RNA-binding. Over residues 402–418 (NVSTSNNSPSTDNDSIS) the composition is skewed to low complexity. A Phosphoserine modification is found at S416. The segment covering 419–428 (KSTTEPIQLN) has biased composition (polar residues). Residues 429–440 (NKHDLHLRPGTY) show a composition bias toward basic and acidic residues.

As to quaternary structure, homotrimer.

Its subcellular location is the cytoplasm. Functionally, capsid protein (CA) is the structural component of the virus-like particle (VLP), forming the shell that encapsulates the retrotransposons dimeric RNA genome. The particles are assembled from trimer-clustered units and there are holes in the capsid shells that allow for the diffusion of macromolecules. CA also has nucleocapsid-like chaperone activity, promoting primer tRNA(i)-Met annealing to the multipartite primer-binding site (PBS), dimerization of Ty1 RNA and initiation of reverse transcription. The sequence is that of Transposon Ty1-LR4 Gag polyprotein (TY1A-LR4) from Saccharomyces cerevisiae (strain ATCC 204508 / S288c) (Baker's yeast).